The chain runs to 630 residues: Ribonucleoside-diphosphate reductase large subunit (630 aa).

Substrate contacts are provided by residues serine 67, 82-83 (AC), glycine 111, 317-321 (NLCSE), and 459-463 (PNATS). Cysteine 83 and cysteine 334 are joined by a disulfide. Residue asparagine 317 is the Proton acceptor of the active site. Catalysis depends on cysteine 319, which acts as the Cysteine radical intermediate. Glutamate 321 functions as the Proton acceptor in the catalytic mechanism.

The protein belongs to the ribonucleoside diphosphate reductase large chain family. In terms of assembly, heterotetramer composed of a homodimer of the large subunit (R1) and a homodimer of the small subunit (R2). Larger multisubunit protein complex are also active, composed of (R1)n(R2)n.

It carries out the reaction a 2'-deoxyribonucleoside 5'-diphosphate + [thioredoxin]-disulfide + H2O = a ribonucleoside 5'-diphosphate + [thioredoxin]-dithiol. Under complex allosteric control mediated by deoxynucleoside triphosphates and ATP binding. The type of nucleotide bound at the specificity site determines substrate preference. It seems probable that ATP makes the enzyme reduce CDP and UDP, dGTP favors ADP reduction and dTTP favors GDP reduction. Ribonucleoside-diphosphate reductase holoenzyme provides the precursors necessary for viral DNA synthesis. Allows virus growth in non-dividing cells. Catalyzes the biosynthesis of deoxyribonucleotides from the corresponding ribonucleotides. The protein is Ribonucleoside-diphosphate reductase large subunit of Aedes vexans (Inland floodwater mosquito).